A 210-amino-acid polypeptide reads, in one-letter code: BAG family molecular chaperone regulator 1 (210 aa).

The Ubiquitin-like domain occupies 8 to 85 (SSVQTTIDIL…IIVMGGKNAL (78 aa)). One can recognise a BAG domain in the interval 108 to 194 (AYDLNLRDVA…TLLNQNDALL (87 aa)).

Homodimer or homotetramer.

Functionally, may inhibit the chaperone activity of HSP70/HSC70 by promoting substrate release in an ATP-dependent manner. This is BAG family molecular chaperone regulator 1 (bag-1) from Caenorhabditis elegans.